The following is a 118-amino-acid chain: Large ribosomal subunit protein bL20 (118 aa).

This sequence belongs to the bacterial ribosomal protein bL20 family.

Binds directly to 23S ribosomal RNA and is necessary for the in vitro assembly process of the 50S ribosomal subunit. It is not involved in the protein synthesizing functions of that subunit. This chain is Large ribosomal subunit protein bL20, found in Edwardsiella ictaluri (strain 93-146).